The chain runs to 647 residues: Leishmanolysin-like peptidase (647 aa).

His-264 contacts Zn(2+). Residue Glu-265 is part of the active site. Positions 268 and 370 each coordinate Zn(2+).

Belongs to the peptidase M8 family. Zn(2+) serves as cofactor. In terms of tissue distribution, expressed in all cell lines analyzed.

It is found in the cytoplasm. The protein localises to the lipid droplet. In terms of biological role, metalloprotease. The chain is Leishmanolysin-like peptidase (LMLN) from Homo sapiens (Human).